The sequence spans 337 residues: Cytoskeleton protein RodZ (337 aa).

The Cytoplasmic segment spans residues 1–111 (MNTEATHDQN…LGKRRKKRDG (111 aa)). In terms of domain architecture, HTH cro/C1-type spans 19-71 (LRNAREQLGLSQQAVAERLCLKVSTVRDIEEDKAPADLASTFLRGYIRSYARL). The H-T-H motif DNA-binding region spans 30 to 49 (QQAVAERLCLKVSTVRDIEE). A helical; Signal-anchor for type II membrane protein membrane pass occupies residues 112 to 132 (WLMTFTWLVLFVVIGLSGAWW). Residues 133–337 (WQDHKAQQEE…TLNAEQSPAQ (205 aa)) lie on the Periplasmic side of the membrane. A compositionally biased stretch (polar residues) spans 145–167 (TMADQSSAELSSNSEQGQSVPLN). The segment at 145-236 (TMADQSSAEL…TAATTPDGAA (92 aa)) is disordered. The segment covering 168–207 (TSTTTDPATTSTPPASVDTTATNTQTPVVTAPAPAVDPQQ) has biased composition (low complexity). Positions 208 to 218 (NAVVSPSQANV) are enriched in polar residues. The span at 219–236 (DTAATPAPTAATTPDGAA) shows a compositional bias: low complexity.

Belongs to the RodZ family.

The protein resides in the cell inner membrane. Cytoskeletal protein that is involved in cell-shape control through regulation of the length of the long axis. The sequence is that of Cytoskeleton protein RodZ from Escherichia coli O157:H7.